A 306-amino-acid chain; its full sequence is uncharacterized protein (306 aa).

Asn208 is a glycosylation site (N-linked (GlcNAc...) asparagine). A run of 2 helical transmembrane segments spans residues 218 to 238 and 284 to 304; these read VFEI…VLFY and VMLV…KITK.

It localises to the membrane. This is an uncharacterized protein from Encephalitozoon cuniculi (strain GB-M1) (Microsporidian parasite).